We begin with the raw amino-acid sequence, 276 residues long: Putative pyruvate, phosphate dikinase regulatory protein (276 aa).

An ADP-binding site is contributed by 150–157 (GVSRTSKT).

Belongs to the pyruvate, phosphate/water dikinase regulatory protein family. PDRP subfamily.

The catalysed reaction is N(tele)-phospho-L-histidyl/L-threonyl-[pyruvate, phosphate dikinase] + ADP = N(tele)-phospho-L-histidyl/O-phospho-L-threonyl-[pyruvate, phosphate dikinase] + AMP + H(+). It carries out the reaction N(tele)-phospho-L-histidyl/O-phospho-L-threonyl-[pyruvate, phosphate dikinase] + phosphate + H(+) = N(tele)-phospho-L-histidyl/L-threonyl-[pyruvate, phosphate dikinase] + diphosphate. Its function is as follows. Bifunctional serine/threonine kinase and phosphorylase involved in the regulation of the pyruvate, phosphate dikinase (PPDK) by catalyzing its phosphorylation/dephosphorylation. The polypeptide is Putative pyruvate, phosphate dikinase regulatory protein (Lacticaseibacillus casei (strain BL23) (Lactobacillus casei)).